We begin with the raw amino-acid sequence, 448 residues long: Proton extrusion protein PxcA (448 aa).

A run of 4 helical transmembrane segments spans residues 231-251 (ILLLIIIPLLIHQLTKTFFLI), 323-343 (IDSIANIFADLFSFIAFVLVL), 372-392 (LIILFTDMFVGFHSPHGWEVI), and 408-428 (FNFLFIATFPVILDTVLKYWI).

The protein belongs to the CemA family.

The protein resides in the cell inner membrane. Functionally, required for H(+) efflux immediately after light irradiation to form a rapid H(+) concentration gradient across the thylakoid membranes. Together with PxcL, contributes to transient H(+) uptake following dark to light transition. The polypeptide is Proton extrusion protein PxcA (Rippkaea orientalis (strain PCC 8801 / RF-1) (Cyanothece sp. (strain PCC 8801))).